We begin with the raw amino-acid sequence, 203 residues long: ATP-dependent Clp protease proteolytic subunit (203 aa).

S107 serves as the catalytic Nucleophile. H132 is a catalytic residue.

This sequence belongs to the peptidase S14 family. Fourteen ClpP subunits assemble into 2 heptameric rings which stack back to back to give a disk-like structure with a central cavity, resembling the structure of eukaryotic proteasomes.

The protein localises to the cytoplasm. The catalysed reaction is Hydrolysis of proteins to small peptides in the presence of ATP and magnesium. alpha-casein is the usual test substrate. In the absence of ATP, only oligopeptides shorter than five residues are hydrolyzed (such as succinyl-Leu-Tyr-|-NHMec, and Leu-Tyr-Leu-|-Tyr-Trp, in which cleavage of the -Tyr-|-Leu- and -Tyr-|-Trp bonds also occurs).. Its function is as follows. Cleaves peptides in various proteins in a process that requires ATP hydrolysis. Has a chymotrypsin-like activity. Plays a major role in the degradation of misfolded proteins. The chain is ATP-dependent Clp protease proteolytic subunit from Shewanella loihica (strain ATCC BAA-1088 / PV-4).